The primary structure comprises 293 residues: MFTGSMVAIITPFDREGRFDEETFRKLIDFQIENGTDVIVPCGTTGESATLDHAEHKKVIKTCIEQVNKRVPVLAGTGSNATSEAIELTRDAKKMGADGALLISPYYNKPSQEGVYRHFKAIADNVALPQVLYNVPGRTGMNMTAATTIRLASHPNVVGIKEASGDLTQASTIIAEAGDQINVISGDDFLTLPMMACGGKGVISVTANILPGEVKAMVTAVNENRYADAKKIHLNLLNLHQAMFIETNPVPVKVAAALMGLCGDHLRLPLVELLPENLASLKKVLSGYGLIQA.

Pyruvate is bound at residue threonine 45. Residue tyrosine 133 is the Proton donor/acceptor of the active site. Lysine 161 acts as the Schiff-base intermediate with substrate in catalysis. Isoleucine 203 serves as a coordination point for pyruvate.

The protein belongs to the DapA family. In terms of assembly, homotetramer; dimer of dimers.

It is found in the cytoplasm. The enzyme catalyses L-aspartate 4-semialdehyde + pyruvate = (2S,4S)-4-hydroxy-2,3,4,5-tetrahydrodipicolinate + H2O + H(+). The protein operates within amino-acid biosynthesis; L-lysine biosynthesis via DAP pathway; (S)-tetrahydrodipicolinate from L-aspartate: step 3/4. Its function is as follows. Catalyzes the condensation of (S)-aspartate-beta-semialdehyde [(S)-ASA] and pyruvate to 4-hydroxy-tetrahydrodipicolinate (HTPA). The protein is 4-hydroxy-tetrahydrodipicolinate synthase of Syntrophotalea carbinolica (strain DSM 2380 / NBRC 103641 / GraBd1) (Pelobacter carbinolicus).